Reading from the N-terminus, the 247-residue chain is Transcription factor otaR1 (247 aa).

Disordered stretches follow at residues 1 to 48 (MEPA…ETSM) and 100 to 143 (DNAS…PLGN). Over residues 23 to 47 (DESSSTGLSLGSLLSSSNDLSSETS) the composition is skewed to low complexity. A compositionally biased stretch (polar residues) spans 134-143 (ANPTSVPLGN). Residues 156 to 196 (KKYHEKYKERNRVAAGKSRQKQVDLIELLQAEQREEERRRK) form a basic motif region. Residues 156 to 219 (KKYHEKYKER…LDLKQELQHH (64 aa)) form the bZIP domain. Positions 198–212 (LERELSQIHKELLDL) are leucine-zipper.

Its subcellular location is the nucleus. Functionally, transcription factor; part of the gene cluster that mediates the biosynthesis of ochratoxin A (OTA), a mycotoxin demonstrated to have nephrotoxic, immunotoxic, genotoxic, neurotoxic, and teratogenic properties. Positively regulates the expression of the cluster genes otaA, otaB, otaC and otaD, and the subsequent production of OTA. The chain is Transcription factor otaR1 from Aspergillus carbonarius (strain ITEM 5010).